A 120-amino-acid chain; its full sequence is NAD(P)H-quinone oxidoreductase subunit 3 (120 aa).

3 helical membrane passes run 1 to 21, 64 to 84, and 89 to 109; these read MFVL…SLVP, MFAL…PWAV, and LGLL…VALV.

The protein belongs to the complex I subunit 3 family. As to quaternary structure, NDH-1 can be composed of about 15 different subunits; different subcomplexes with different compositions have been identified which probably have different functions.

The protein localises to the cellular thylakoid membrane. It catalyses the reaction a plastoquinone + NADH + (n+1) H(+)(in) = a plastoquinol + NAD(+) + n H(+)(out). The enzyme catalyses a plastoquinone + NADPH + (n+1) H(+)(in) = a plastoquinol + NADP(+) + n H(+)(out). NDH-1 shuttles electrons from an unknown electron donor, via FMN and iron-sulfur (Fe-S) centers, to quinones in the respiratory and/or the photosynthetic chain. The immediate electron acceptor for the enzyme in this species is believed to be plastoquinone. Couples the redox reaction to proton translocation, and thus conserves the redox energy in a proton gradient. Cyanobacterial NDH-1 also plays a role in inorganic carbon-concentration. The sequence is that of NAD(P)H-quinone oxidoreductase subunit 3 from Trichormus variabilis (strain ATCC 29413 / PCC 7937) (Anabaena variabilis).